Reading from the N-terminus, the 484-residue chain is Ribosomal protein uS12 methylthiotransferase RimO (484 aa).

Residues arginine 8–alanine 119 enclose the MTTase N-terminal domain. Residues cysteine 17, cysteine 53, cysteine 82, cysteine 184, cysteine 188, and cysteine 191 each contribute to the [4Fe-4S] cluster site. Residues leucine 170–arginine 401 enclose the Radical SAM core domain. The 67-residue stretch at glutamate 403–glycine 469 folds into the TRAM domain.

The protein belongs to the methylthiotransferase family. RimO subfamily. It depends on [4Fe-4S] cluster as a cofactor.

It localises to the cytoplasm. The enzyme catalyses L-aspartate(89)-[ribosomal protein uS12]-hydrogen + (sulfur carrier)-SH + AH2 + 2 S-adenosyl-L-methionine = 3-methylsulfanyl-L-aspartate(89)-[ribosomal protein uS12]-hydrogen + (sulfur carrier)-H + 5'-deoxyadenosine + L-methionine + A + S-adenosyl-L-homocysteine + 2 H(+). Its function is as follows. Catalyzes the methylthiolation of an aspartic acid residue of ribosomal protein uS12. The protein is Ribosomal protein uS12 methylthiotransferase RimO of Saccharopolyspora erythraea (strain ATCC 11635 / DSM 40517 / JCM 4748 / NBRC 13426 / NCIMB 8594 / NRRL 2338).